The following is an 80-amino-acid chain: Large ribosomal subunit protein bL28 (80 aa).

Residues 1–23 are disordered; that stretch reads MARVCQITGKKTRTGNNVSHANN.

It belongs to the bacterial ribosomal protein bL28 family.

The chain is Large ribosomal subunit protein bL28 from Cytophaga hutchinsonii (strain ATCC 33406 / DSM 1761 / CIP 103989 / NBRC 15051 / NCIMB 9469 / D465).